The chain runs to 30 residues: Alpha-defensin PhD-4 (30 aa).

Cystine bridges form between cysteine 2–cysteine 30, cysteine 4–cysteine 19, and cysteine 9–cysteine 29.

It is found in the secreted. In low salt conditions, has antibacterial activity against the Gram-negative bacterium E.coli ML35p (MIC=2.4 uM), the Gram-positive bacteria L.monocytogenes EGD (MIC=2.2 uM) and methicillin-resistant S.aureus ATCC 33591 (MIC=3.5 uM), and the fungus C.albicans 820 (MIC=3.9 uM). At high physiological salt concentrations the antimicrobial activity decreases significantly: E.coli ML35p (MIC=7.1 uM), L.monocytogenes EGD (MIC=1.8 uM), S.aureus ATCC 33591 (MIC=&gt;50 uM), and C.albicans 820 (MIC=&gt;50 uM). The chain is Alpha-defensin PhD-4 from Papio hamadryas (Hamadryas baboon).